Reading from the N-terminus, the 615-residue chain is Aldehyde oxidase GLOX1 (615 aa).

The first 25 residues, 1–25 (MKKSTRLLWLLSIIVLVAAVSKAVA), serve as a signal peptide directing secretion. A glycan (N-linked (GlcNAc...) asparagine) is linked at Asn-35. Residues 70 to 89 (PPKAGKGKGKGKGRGTVAAG) form a disordered region. Residues 72–82 (KAGKGKGKGKG) show a composition bias toward basic residues. N-linked (GlcNAc...) asparagine glycans are attached at residues Asn-187 and Asn-297.

The protein resides in the secreted. It carries out the reaction an aldehyde + O2 + H2O = a carboxylate + H2O2 + H(+). Its function is as follows. Catalyzes the oxidation of aldehydes to the corresponding carboxylate by coupling the reaction to the reduction of dioxygen to hydrogen peroxide. Substrates include glyoxal and other aldehydes. May be regulated by the transcription factor MYB80 during anther development and play a role in tapetum and pollen development. The protein is Aldehyde oxidase GLOX1 of Arabidopsis thaliana (Mouse-ear cress).